Consider the following 201-residue polypeptide: tRNA (guanine-N(7)-)-methyltransferase (201 aa).

E33, E58, D85, and D106 together coordinate S-adenosyl-L-methionine. D106 is a catalytic residue. Residues K110, D142, and 180-183 (TTYE) contribute to the substrate site.

Belongs to the class I-like SAM-binding methyltransferase superfamily. TrmB family.

It carries out the reaction guanosine(46) in tRNA + S-adenosyl-L-methionine = N(7)-methylguanosine(46) in tRNA + S-adenosyl-L-homocysteine. It functions in the pathway tRNA modification; N(7)-methylguanine-tRNA biosynthesis. In terms of biological role, catalyzes the formation of N(7)-methylguanine at position 46 (m7G46) in tRNA. In Mesomycoplasma hyopneumoniae (strain 7448) (Mycoplasma hyopneumoniae), this protein is tRNA (guanine-N(7)-)-methyltransferase.